Consider the following 387-residue polypeptide: Succinate--CoA ligase [ADP-forming] subunit beta (387 aa).

The 237-residue stretch at 9 to 245 (KDLLESYGLK…KSQENAKELK (237 aa)) folds into the ATP-grasp domain. Residues Lys46, 53–55 (GRG), Glu100, Tyr103, and Glu108 each bind ATP. 2 residues coordinate Mg(2+): Asn200 and Asp214. Substrate is bound by residues Asn265 and 322–324 (GIV).

This sequence belongs to the succinate/malate CoA ligase beta subunit family. As to quaternary structure, heterotetramer of two alpha and two beta subunits. Requires Mg(2+) as cofactor.

The enzyme catalyses succinate + ATP + CoA = succinyl-CoA + ADP + phosphate. It carries out the reaction GTP + succinate + CoA = succinyl-CoA + GDP + phosphate. The protein operates within carbohydrate metabolism; tricarboxylic acid cycle; succinate from succinyl-CoA (ligase route): step 1/1. Succinyl-CoA synthetase functions in the citric acid cycle (TCA), coupling the hydrolysis of succinyl-CoA to the synthesis of either ATP or GTP and thus represents the only step of substrate-level phosphorylation in the TCA. The beta subunit provides nucleotide specificity of the enzyme and binds the substrate succinate, while the binding sites for coenzyme A and phosphate are found in the alpha subunit. This chain is Succinate--CoA ligase [ADP-forming] subunit beta, found in Francisella tularensis subsp. tularensis (strain FSC 198).